The chain runs to 192 residues: NADH:FMN oxidoreductase (192 aa).

Residues 1 to 20 form a disordered region; that stretch reads MSDKPNAVSSHTTPDVPEVA. FMN is bound by residues 60 to 63, 77 to 84, alanine 111, and arginine 117; these read TATS and NIAETSSS.

This sequence belongs to the non-flavoprotein flavin reductase family.

The protein resides in the cytoplasm. It carries out the reaction FMNH2 + NAD(+) = FMN + NADH + 2 H(+). It participates in sulfur metabolism; dibenzothiophene degradation. Functionally, an NADH:FMN oxidoreductase which supplies reduced FMN for the '4S' desulfurization pathway that removes covalently bound sulfur from dibenzothiophene (DBT) without breaking carbon-carbon bonds. Provides DszA and DszC (DBTO2-monooxygenase and DBT-monooxygenase respectively) with reduced flavin (FMN). The sequence is that of NADH:FMN oxidoreductase from Rhodococcus erythropolis (Arthrobacter picolinophilus).